Reading from the N-terminus, the 266-residue chain is MSHITKIKNWNTNLRKNMENIVNRTYTRIGQLLKQDISQGIYSIGDKLPTEREISEKFGVSRTIVREAMVMLEVEKLVEVKKGSGVYVVRTPESIHMEHSDLPDVGPFELLQARQLLESSIAEFAALQATKKDILNLKQILNREKELLTQNQDDYSADKDFHLALAEITQNDVLVKLQEQLWQYRFNSAMWAQLHSRILQNDYHHLWIEDHQTILSAIQKKNANEARKAMWQHLENVKVKLFELSDVEDPHFDGYLFNTNPVVVGI.

Positions Asn23–Thr91 constitute an HTH gntR-type domain. The H-T-H motif DNA-binding region spans Glu51–Val70.

In terms of biological role, repressor for the uxuRBA operon. This Haemophilus influenzae (strain ATCC 51907 / DSM 11121 / KW20 / Rd) protein is Uxu operon regulator (uxuR).